The primary structure comprises 1100 residues: ATP-dependent DNA helicase mph1 (1100 aa).

Over residues Met-1–Ala-21 the composition is skewed to acidic residues. The disordered stretch occupies residues Met-1–Asn-250. The segment covering Arg-38 to Phe-61 has biased composition (low complexity). Basic and acidic residues predominate over residues Phe-84–Ser-94. A compositionally biased stretch (polar residues) spans Asn-104 to Gln-117. Residues Pro-135 to Pro-146 are compositionally biased toward pro residues. 2 stretches are compositionally biased toward polar residues: residues Arg-182–Ser-191 and Asn-200–Glu-209. Positions Asp-212–Asp-223 are enriched in acidic residues. Low complexity predominate over residues Ser-237 to Ser-249. A Helicase ATP-binding domain is found at Ile-317–Lys-485. Leu-330–Thr-337 provides a ligand contact to ATP. Residues Asp-433 to His-436 carry the DEAH box motif. A Helicase C-terminal domain is found at Tyr-655–Lys-829. 2 disordered regions span residues Pro-850 to Val-913 and Arg-1003 to Arg-1100. 2 stretches are compositionally biased toward basic residues: residues Arg-863 to Phe-875 and Gly-1019 to Arg-1028. Residues Gln-1053–Asp-1066 are compositionally biased toward polar residues. The segment covering Leu-1082–Asp-1092 has biased composition (acidic residues).

This sequence belongs to the DEAD box helicase family. DEAH subfamily. FANCM sub-subfamily. In terms of assembly, interacts with the MHF histone-fold complex to form the FANCM-MHF complex.

The protein localises to the nucleus. It carries out the reaction ATP + H2O = ADP + phosphate + H(+). Functionally, ATP-dependent DNA helicase involved in DNA damage repair by homologous recombination and in genome maintenance. Capable of unwinding D-loops. Plays a role in limiting crossover recombinants during mitotic DNA double-strand break (DSB) repair. Component of a FANCM-MHF complex which promotes gene conversion at blocked replication forks, probably by reversal of the stalled fork. The chain is ATP-dependent DNA helicase mph1 from Aspergillus terreus (strain NIH 2624 / FGSC A1156).